Consider the following 462-residue polypeptide: Glycoprotein endo-alpha-1,2-mannosidase (462 aa).

The Cytoplasmic segment spans residues 1-9 (MAKFRRRTC). The helical; Signal-anchor for type II membrane protein transmembrane segment at 10-30 (IILSLFIVFIFSLMMGLKMLW) threads the bilayer. Residues 31-462 (PNAASFGPPF…YALDQQLPAS (432 aa)) are Lumenal-facing. A catalytic region spans residues 60 to 462 (DFQRSDRIDM…YALDQQLPAS (403 aa)).

Belongs to the glycosyl hydrolase 99 family. In terms of processing, undergoes proteolytic cleavage in the C-terminal region. In terms of tissue distribution, highly expressed in the liver and kidney.

The protein resides in the golgi apparatus membrane. It catalyses the reaction N-{alpha-Glc-(1-&gt;3)-alpha-Man-(1-&gt;2)-alpha-Man-(1-&gt;2)-alpha-Man-(1-&gt;3)-[alpha-Man-(1-&gt;2)-alpha-Man-(1-&gt;3)-[alpha-Man-(1-&gt;2)-alpha-Man-(1-&gt;6)]-alpha-Man-(1-&gt;6)]-beta-Man-(1-&gt;4)-beta-GlcNAc-(1-&gt;4)-beta-GlcNAc}-L-asparaginyl-[protein] + H2O = alpha-D-glucosyl-(1-&gt;3)-D-mannopyranose + N(4)-{alpha-D-Man-(1-&gt;2)-alpha-D-Man-(1-&gt;3)-[alpha-D-Man-(1-&gt;2)-alpha-D-Man-(1-&gt;3)-[alpha-D-Man-(1-&gt;2)-alpha-D-Man-(1-&gt;6)]-alpha-D-Man-(1-&gt;6)]-beta-D-Man-(1-&gt;4)-beta-D-GlaNAc-(1-&gt;4)-beta-D-GlcNAc}-L-asparaginyl-[protein] (N-glucan mannose isomer 8A1,2,3B1,2). The protein is Glycoprotein endo-alpha-1,2-mannosidase (Manea) of Rattus norvegicus (Rat).